The sequence spans 702 residues: Polyribonucleotide nucleotidyltransferase (702 aa).

2 residues coordinate Mg(2+): D487 and D493. The region spanning 554-613 is the KH domain; the sequence is PKILTMQINPDKIRDVIGPSGKQINKIIEETGVKIDIEQDGTIFISSVNEEMNKKAKKII. The region spanning 623–691 is the S1 motif domain; it reads GQVYLGKVKR…KQGRVNLSRK (69 aa).

It belongs to the polyribonucleotide nucleotidyltransferase family. Mg(2+) serves as cofactor.

Its subcellular location is the cytoplasm. The catalysed reaction is RNA(n+1) + phosphate = RNA(n) + a ribonucleoside 5'-diphosphate. Functionally, involved in mRNA degradation. Catalyzes the phosphorolysis of single-stranded polyribonucleotides processively in the 3'- to 5'-direction. The chain is Polyribonucleotide nucleotidyltransferase from Anoxybacillus flavithermus (strain DSM 21510 / WK1).